Here is a 125-residue protein sequence, read N- to C-terminus: Protein ApaG (125 aa).

In terms of domain architecture, ApaG spans 1–125; it reads MIDSPRVCVQ…FRLAVPTFIH (125 aa).

The protein is Protein ApaG of Enterobacter sp. (strain 638).